The sequence spans 136 residues: uncharacterized protein (136 aa).

It is found in the cytoplasm. The protein resides in the nucleus. This is an uncharacterized protein from Schizosaccharomyces pombe (strain 972 / ATCC 24843) (Fission yeast).